The chain runs to 702 residues: Amino-acid racemase (702 aa).

Topologically, residues 1–12 (MKHRANGIDLFR) are cytoplasmic. A helical membrane pass occupies residues 13–33 (IFAATMVVAIHTFPFQSIAPF). Topologically, residues 34–39 (LDEVIT) are extracellular. The helical transmembrane segment at 40–60 (LTVFRVAVPFFFMITGYFLLG) threads the bilayer. The Cytoplasmic segment spans residues 61-77 (RLSLNFSYNNNQRVKKY). A helical membrane pass occupies residues 78–98 (LYKIGMIYLYSILLYFPLSLL). Residues 99 to 120 (NGTISLKMNILLLLKVFIFDGT) lie on the Extracellular side of the membrane. The helical transmembrane segment at 121 to 141 (FYHLWYFPASIIGTILVTLLL) threads the bilayer. Position 142 (Arg-142) is a topological domain, cytoplasmic. A helical membrane pass occupies residues 143-163 (SIGFKLTVAFSTCLYLVGLGG). Residues 164–191 (DSWYGITNQVPLLNKLYTFIFSWSDYTR) lie on the Extracellular side of the membrane. Residues 192–212 (SGVFFTPVFLCLGIFAYRVSK) traverse the membrane as a helical segment. The Cytoplasmic segment spans residues 213–218 (KLTASK). A helical membrane pass occupies residues 219–239 (ILNLLFYVFIIGMTFESIFLH). Over 240–248 (RFTNVKHDS) the chain is Extracellular. Residues 249 to 269 (MYLLLPSCALILFLMLLNWQP) form a helical membrane-spanning segment. The Cytoplasmic portion of the chain corresponds to 270–276 (KLKVKES). The helical transmembrane segment at 277-297 (ADLTLLVYILHPLVIVIVHSI) threads the bilayer. Topologically, residues 298-307 (SKYIPILKNS) are extracellular. The helical transmembrane segment at 308 to 328 (LLNFLLVVVCSFILAQLLLNL) threads the bilayer. Residues 329-702 (KRKLRVSKQK…LGSRLGTELN (374 aa)) are Cytoplasmic-facing. A racemase region spans residues 337–702 (QKIPFERASK…LGSRLGTELN (366 aa)). The active-site Proton acceptor is the Lys-375. Lys-375 is modified (N6-(pyridoxal phosphate)lysine). Residue Arg-469 coordinates substrate. The active-site Proton acceptor is the Tyr-601. Position 650 (Met-650) interacts with substrate.

This sequence in the N-terminal section; belongs to the acyltransferase 3 family. In the C-terminal section; belongs to the alanine racemase family. It depends on pyridoxal 5'-phosphate as a cofactor.

The protein localises to the cell membrane. This is Amino-acid racemase (vanTE) from Enterococcus faecalis (Streptococcus faecalis).